The primary structure comprises 254 residues: UPF0246 protein FTW_0267 (254 aa).

The protein belongs to the UPF0246 family.

This is UPF0246 protein FTW_0267 from Francisella tularensis subsp. tularensis (strain WY96-3418).